The following is a 373-amino-acid chain: G protein-coupled receptor 137Ba (373 aa).

The Lumenal segment spans residues Met1 to Pro15. Residues Tyr16–Val36 traverse the membrane as a helical segment. Topologically, residues Tyr37–Thr55 are cytoplasmic. A helical transmembrane segment spans residues Val56 to Phe76. The Lumenal segment spans residues Lys77–Thr84. A helical membrane pass occupies residues Leu85–Leu105. The Cytoplasmic segment spans residues Ser106–Tyr135. The chain crosses the membrane as a helical span at residues Leu136–Val156. At Lys157 to Ser176 the chain is on the lumenal side. Residues Leu177–Leu197 traverse the membrane as a helical segment. Residues Ala198–Thr213 lie on the Cytoplasmic side of the membrane. A helical transmembrane segment spans residues Leu214–Leu234. The Lumenal segment spans residues Ala235 to Val268. Residues Val269–Phe289 form a helical membrane-spanning segment. Over Arg290–Tyr373 the chain is Cytoplasmic.

It belongs to the GPR137 family.

It is found in the lysosome membrane. Functionally, lysosomal integral membrane protein that regulates the localization and activity of mTORC1, a signaling complex promoting cell growth in response to growth factors, energy levels, and amino acids. Interacts with Rag GTPases and increases the lysosomial localization and activity of Rag GTPases and thereby regulates mTORC1 translocation and activity in lysosome. Also acts as a negative regulator of osteoclast activity. May be involved in interleukin-4-induced M2 macrophage polarization. Its function is as follows. Also acts as a negative regulator of osteoclast activity. May be involved in interleukin-4-induced M2 macrophage polarization. In Danio rerio (Zebrafish), this protein is G protein-coupled receptor 137Ba.